The primary structure comprises 377 residues: Succinyl-diaminopimelate desuccinylase (377 aa).

Residue H68 coordinates Zn(2+). D70 is an active-site residue. D101 provides a ligand contact to Zn(2+). E135 serves as the catalytic Proton acceptor. E136, E164, and H350 together coordinate Zn(2+).

This sequence belongs to the peptidase M20A family. DapE subfamily. Homodimer. Requires Zn(2+) as cofactor. The cofactor is Co(2+).

It catalyses the reaction N-succinyl-(2S,6S)-2,6-diaminopimelate + H2O = (2S,6S)-2,6-diaminopimelate + succinate. It participates in amino-acid biosynthesis; L-lysine biosynthesis via DAP pathway; LL-2,6-diaminopimelate from (S)-tetrahydrodipicolinate (succinylase route): step 3/3. Its function is as follows. Catalyzes the hydrolysis of N-succinyl-L,L-diaminopimelic acid (SDAP), forming succinate and LL-2,6-diaminopimelate (DAP), an intermediate involved in the bacterial biosynthesis of lysine and meso-diaminopimelic acid, an essential component of bacterial cell walls. The sequence is that of Succinyl-diaminopimelate desuccinylase from Acinetobacter baumannii (strain AB0057).